The chain runs to 526 residues: MDTLGIFVLISYLGLSSAAGVHLGDLQQNLAANGSVVVSPLNTTDAFSVSINLSQSTVNNCPSLKNAESMALMELLTRLTAPCRYDRMVPPVVHNKDGEEVPMDIYARFYIYVMKNLDSSDLQFTVQGLLQLRYLDPRLAFSSYLPNRRQPIMGESELKKMLWVPHIFLTNEQASTVLGTSAKDELTSIYPNGTVLTSTRLQATLYCWMNFQKFPFDEQKCKTTLESWMYNTTLVQLHWETDNPVSFDKQLQLTEYNLIGSLYNESIRVSNESYMSHGSLEGNYSIISFTVLLTREVGYYVIDYFLPSIMIVTISWVSFWLQADQTPARTTLGCTTLLSFITLSLSQENNLMKVSYVTMSEVWFLVCTIFIFGSLVEFAFVNTIWRRNNDLQLKKRTTKYIVKSTFVPHLKKHRRHGYRRTDSTMSTMSTTSMDKTCGPNNTVITIETPIIIGGSLSREDSAISLDEQDETSTSESSDSSKEKPAQTFATMTPKEVSLWIDRKMRFVFPLSFIVFNALFWTLVYCL.

An N-terminal signal peptide occupies residues 1–18 (MDTLGIFVLISYLGLSSA). The Extracellular portion of the chain corresponds to 19–300 (AGVHLGDLQQ…VLLTREVGYY (282 aa)). Residues asparagine 33, asparagine 42, asparagine 52, asparagine 192, asparagine 231, asparagine 264, asparagine 271, and asparagine 283 are each glycosylated (N-linked (GlcNAc...) asparagine). Residues 301–321 (VIDYFLPSIMIVTISWVSFWL) traverse the membrane as a helical segment. Residues 322–327 (QADQTP) lie on the Cytoplasmic side of the membrane. The helical transmembrane segment at 328-347 (ARTTLGCTTLLSFITLSLSQ) threads the bilayer. Over 348–360 (ENNLMKVSYVTMS) the chain is Extracellular. The chain crosses the membrane as a helical span at residues 361–381 (EVWFLVCTIFIFGSLVEFAFV). The Cytoplasmic portion of the chain corresponds to 382 to 505 (NTIWRRNNDL…VSLWIDRKMR (124 aa)). The segment at 463–488 (ISLDEQDETSTSESSDSSKEKPAQTF) is disordered. A helical membrane pass occupies residues 506 to 526 (FVFPLSFIVFNALFWTLVYCL).

This sequence belongs to the ligand-gated ion channel (TC 1.A.9) family. In terms of tissue distribution, in third-instar larvae, expressed in the principal cells of the excretory Malpighian tubules (at protein level). Also detected in the enterocytes of the copper cell region and the iron cell region of the larval midgut (at protein level). In the copper cell region expression is confined to the interstitial cells and in the iron cell region it is expressed in the anterior portion (at protein level). Expressed in the Malpighian tubules and the middle midgut of third instar larvae and adults.

Its subcellular location is the apical cell membrane. It localises to the cell projection. The protein resides in the microvillus membrane. It is found in the late endosome membrane. The protein localises to the lysosome membrane. The catalysed reaction is chloride(in) = chloride(out). Ligand and pH-gated channel that mediates chloride transport primarily in the mid-gut and thereby functions in larval metabolism and fluid homeostasis. Channel opening is triggered by zinc binding or, to a lesser extent, an increase in extracellular pH. Zinc-dependent activity in the mid-gut is required for modulating Tor-dependent metabolic programs that promote larval feeding and systematic growth. It may therefore act as an intestinal zinc sensor that mediates larval growth and metabolism in response to micronutrient availability. Activates Tor signaling via its activity in maintaining lysosome homeostasis in interstitial cells and/or by its role in activating the release of insulin-like peptides in the brain after feeding, via an unknown mechanism. Functions in lysosome homeostasis by regulating chloride transport into enterocyte lysosomes to sustain V-ATPase function which maintains lysosomal acidification and consequently promotes Tor activation at the lysosome membrane. Also appears to play a role in regulating fluid secretion and osmotic homeostasis in Malpighian tubules in response to the pH of extracellular urine. This function is important for proper urine production during diuresis. The chain is pH-sensitive chloride channel 2 from Drosophila melanogaster (Fruit fly).